A 189-amino-acid chain; its full sequence is uncharacterized protein (189 aa).

The signal sequence occupies residues 1-19; that stretch reads MKRVLFFLLMIFVSFGVIA.

This is an uncharacterized protein from Escherichia coli (strain K12).